Here is a 664-residue protein sequence, read N- to C-terminus: MSSRKHLANAIRALSMDGVQQANSGHPGAPMGMADIAEVLWRSHLNHNPQNPEWADRDRFILSNGHGSMLIYSLLHLSGYDLSIEDLKNFRQLHSKTPGHPEYGYAPGVETTTGPLGQGITNGVGMAMAEKALAAQFNREGHDIVDHNTYVFMGDGCLMEGISHEACSLAGTLGLGKLIAFWDDNGISIDGEVEGWFSDDTPKRFEAYGWHVIPAVDGHDSDAINAAIEAAKADPRPSLICTKTVIGFGSPNKQGTHDCHGAPLGAEEIAATKAQLGWEYGAFDIPADVYAGWDAKEVGAEKEAAWNAKFDAYAAAHPELAAEYKRRVNGDLPAEWEEKANTIIADLQANPANIASRKASQNALEAFGAMLPEFMGGSADLAPSNLTMWSGSKSLEANDFSGNYIHYGVREFGMTAIMNGIALHGGFVPYGATFLMFMEYARNAMRMAALMKVQNIQVYTHDSIGLGEDGPTHQPVEQIASLRLTPNMSTWRPCDQVESAVAWKLAIERKDGPSSLIFSRQNLAQQERTQEQVADIAKGAYILKDCEGQPELILIATGSEVELAVEAAAQLTAEGKAVRVVSMPSTDAFDKQDEGYREAVFPSAVTKRIAIEAGIADFWYKYVGFGGKIIGMTTFGESAPADELFKMFGFTTENVVNTAKELLA.

His-26 lines the substrate pocket. Thiamine diphosphate-binding positions include His-66 and 114-116; that span reads GPL. Mg(2+) is bound at residue Asp-155. Residues Gly-156 and Asn-185 each contribute to the thiamine diphosphate site. Mg(2+) contacts are provided by Asn-185 and Ile-187. Substrate contacts are provided by His-260, Arg-357, and Ser-384. His-260 lines the thiamine diphosphate pocket. Glu-411 functions as the Proton donor in the catalytic mechanism. Phe-437 serves as a coordination point for thiamine diphosphate. Positions 461, 469, and 520 each coordinate substrate.

Belongs to the transketolase family. Homodimer. The cofactor is Mg(2+). Ca(2+) serves as cofactor. Requires Mn(2+) as cofactor. It depends on Co(2+) as a cofactor. Thiamine diphosphate is required as a cofactor.

It catalyses the reaction D-sedoheptulose 7-phosphate + D-glyceraldehyde 3-phosphate = aldehydo-D-ribose 5-phosphate + D-xylulose 5-phosphate. Catalyzes the transfer of a two-carbon ketol group from a ketose donor to an aldose acceptor, via a covalent intermediate with the cofactor thiamine pyrophosphate. The sequence is that of Transketolase 1 (tkt1) from Aliivibrio fischeri (strain ATCC 700601 / ES114) (Vibrio fischeri).